A 225-amino-acid chain; its full sequence is UPF0758 protein Sfri_3828 (225 aa).

In terms of domain architecture, MPN spans 102–224; it reads ILTNPDLTRD…IVSFAERGWI (123 aa). 3 residues coordinate Zn(2+): His173, His175, and Asp186. The short motif at 173-186 is the JAMM motif element; the sequence is HNHPSGIAEPSQAD.

Belongs to the UPF0758 family.

The sequence is that of UPF0758 protein Sfri_3828 from Shewanella frigidimarina (strain NCIMB 400).